The sequence spans 328 residues: Malate dehydrogenase (328 aa).

11–17 (GAAGQIG) lines the NAD(+) pocket. Arg-94 and Arg-100 together coordinate substrate. Residues Asn-107, Gln-114, and 131 to 133 (VGN) contribute to the NAD(+) site. Positions 133 and 164 each coordinate substrate. The Proton acceptor role is filled by His-189.

This sequence belongs to the LDH/MDH superfamily. MDH type 2 family.

The catalysed reaction is (S)-malate + NAD(+) = oxaloacetate + NADH + H(+). Its function is as follows. Catalyzes the reversible oxidation of malate to oxaloacetate. This chain is Malate dehydrogenase, found in Xanthomonas campestris pv. campestris (strain B100).